The following is a 155-amino-acid chain: 6,7-dimethyl-8-ribityllumazine synthase (155 aa).

5-amino-6-(D-ribitylamino)uracil-binding positions include Phe-23, 57 to 59, and 81 to 83; these read AFE and AVI. (2S)-2-hydroxy-3-oxobutyl phosphate is bound at residue 86–87; it reads ST. His-89 serves as the catalytic Proton donor. Phe-114 contributes to the 5-amino-6-(D-ribitylamino)uracil binding site. Arg-128 provides a ligand contact to (2S)-2-hydroxy-3-oxobutyl phosphate.

Belongs to the DMRL synthase family.

It catalyses the reaction (2S)-2-hydroxy-3-oxobutyl phosphate + 5-amino-6-(D-ribitylamino)uracil = 6,7-dimethyl-8-(1-D-ribityl)lumazine + phosphate + 2 H2O + H(+). The protein operates within cofactor biosynthesis; riboflavin biosynthesis; riboflavin from 2-hydroxy-3-oxobutyl phosphate and 5-amino-6-(D-ribitylamino)uracil: step 1/2. Catalyzes the formation of 6,7-dimethyl-8-ribityllumazine by condensation of 5-amino-6-(D-ribitylamino)uracil with 3,4-dihydroxy-2-butanone 4-phosphate. This is the penultimate step in the biosynthesis of riboflavin. In Pelobacter propionicus (strain DSM 2379 / NBRC 103807 / OttBd1), this protein is 6,7-dimethyl-8-ribityllumazine synthase.